The following is a 578-amino-acid chain: Putative diflavin flavoprotein A 2 (578 aa).

The tract at residues 39 to 233 (QQGTTSNSYL…PPPRLYAPAH (195 aa)) is zinc metallo-hydrolase. The 143-residue stretch at 262-404 (VALFYASAYG…AANEFAQALK (143 aa)) folds into the Flavodoxin-like domain. Positions 429–578 (VNRVVGSLCV…TAIQHRKTSS (150 aa)) are flavodoxin-reductase-like.

In the N-terminal section; belongs to the zinc metallo-hydrolase group 3 family. The protein in the C-terminal section; belongs to the flavodoxin reductase family. Fe cation is required as a cofactor.

In terms of biological role, mediates electron transfer from NADH to oxygen, reducing it to water. This modular protein has 3 redox cofactors, in other organisms the same activity requires 2 or 3 proteins. The polypeptide is Putative diflavin flavoprotein A 2 (dfa2) (Thermosynechococcus vestitus (strain NIES-2133 / IAM M-273 / BP-1)).